We begin with the raw amino-acid sequence, 257 residues long: Hydroxyacylglutathione hydrolase (257 aa).

Positions 54, 56, 58, 59, 109, 129, and 167 each coordinate Zn(2+).

It belongs to the metallo-beta-lactamase superfamily. Glyoxalase II family. As to quaternary structure, monomer. Zn(2+) serves as cofactor.

It catalyses the reaction an S-(2-hydroxyacyl)glutathione + H2O = a 2-hydroxy carboxylate + glutathione + H(+). It participates in secondary metabolite metabolism; methylglyoxal degradation; (R)-lactate from methylglyoxal: step 2/2. Functionally, thiolesterase that catalyzes the hydrolysis of S-D-lactoyl-glutathione to form glutathione and D-lactic acid. This chain is Hydroxyacylglutathione hydrolase, found in Marinomonas sp. (strain MWYL1).